A 513-amino-acid chain; its full sequence is MQLNPSEISELIKSRIQGLEASADVRNQGTVISVTDGIVRIHGLSDVMQGEMLEFPGNTFGLALNLERDSVGAVILGEYEHISEGDVVKTTGRILEVPVGPELVGRVVDALGNPIDGKGPVNAKLTDAIEKIAPGVIWRKSVSQPVQTGIKSIDAMVPIGRGQRELIIGDRQCGKTAVAIDAIINQKGKDLVCIYVAIGQKASSIMNVVRKLEETGAMEYTIVVAASASDSAAMQYLAPYAGCTMGEYFRDRGQDALIIYDDLTKQAWAYRQISLLLRRPPGREAYPGDVFYLHSRLLERAARVSEEYVEKFTNGEVKGKSGSLTALPVIETQAGDVTAFVPTNVISITDGQIFLETDLFNAGIRPAINAGVSVSRVGGAAQTKVVKKLSGGIRTDLAQYRELAAFAQFASDLDEATRKQLERGRRVTELLKQPQYQPLQVWELAVSLYAANNGYLDDLDVKQVLPFEKGLRDNLKTSHADLIKRIEDTKDLSKDDEGALRAAIESFKKSGAY.

ATP is bound at residue 169–176 (GDRQCGKT).

This sequence belongs to the ATPase alpha/beta chains family. As to quaternary structure, F-type ATPases have 2 components, CF(1) - the catalytic core - and CF(0) - the membrane proton channel. CF(1) has five subunits: alpha(3), beta(3), gamma(1), delta(1), epsilon(1). CF(0) has three main subunits: a(1), b(2) and c(9-12). The alpha and beta chains form an alternating ring which encloses part of the gamma chain. CF(1) is attached to CF(0) by a central stalk formed by the gamma and epsilon chains, while a peripheral stalk is formed by the delta and b chains.

Its subcellular location is the cell inner membrane. It carries out the reaction ATP + H2O + 4 H(+)(in) = ADP + phosphate + 5 H(+)(out). Its function is as follows. Produces ATP from ADP in the presence of a proton gradient across the membrane. The alpha chain is a regulatory subunit. The polypeptide is ATP synthase subunit alpha (Burkholderia ambifaria (strain MC40-6)).